The sequence spans 111 residues: Wound-induced proteinase inhibitor 1 (111 aa).

Positions 1–23 (MEAKFAHIILFFLLAFSFETLMA) are cleaved as a signal peptide. The propeptide occupies 24 to 36 (RKESDGPEVIKLL).

It belongs to the protease inhibitor I13 (potato type I serine protease inhibitor) family.

Its subcellular location is the secreted. The chain is Wound-induced proteinase inhibitor 1 from Solanum peruvianum (Peruvian tomato).